The sequence spans 364 residues: Probable dual-specificity RNA methyltransferase RlmN (364 aa).

The active-site Proton acceptor is the E107. The Radical SAM core domain maps to 113–346 (HEYGNSVCVT…ATIRREQGSD (234 aa)). C120 and C351 are joined by a disulfide. C127, C131, and C134 together coordinate [4Fe-4S] cluster. S-adenosyl-L-methionine contacts are provided by residues 177–178 (GE), S209, 232–234 (SLH), and N308. The S-methylcysteine intermediate role is filled by C351.

It belongs to the radical SAM superfamily. RlmN family. [4Fe-4S] cluster is required as a cofactor.

It localises to the cytoplasm. The enzyme catalyses adenosine(2503) in 23S rRNA + 2 reduced [2Fe-2S]-[ferredoxin] + 2 S-adenosyl-L-methionine = 2-methyladenosine(2503) in 23S rRNA + 5'-deoxyadenosine + L-methionine + 2 oxidized [2Fe-2S]-[ferredoxin] + S-adenosyl-L-homocysteine. It carries out the reaction adenosine(37) in tRNA + 2 reduced [2Fe-2S]-[ferredoxin] + 2 S-adenosyl-L-methionine = 2-methyladenosine(37) in tRNA + 5'-deoxyadenosine + L-methionine + 2 oxidized [2Fe-2S]-[ferredoxin] + S-adenosyl-L-homocysteine. Its function is as follows. Specifically methylates position 2 of adenine 2503 in 23S rRNA and position 2 of adenine 37 in tRNAs. Confers resistance to some classes of antibiotics. This Staphylococcus epidermidis (strain ATCC 35984 / DSM 28319 / BCRC 17069 / CCUG 31568 / BM 3577 / RP62A) protein is Probable dual-specificity RNA methyltransferase RlmN.